The sequence spans 632 residues: 2-hydroxyacyl-CoA lyase 2 (632 aa).

A helical transmembrane segment spans residues 13 to 33; sequence LFPSFLLLACGTLVAALLGAA. Glu98 contacts thiamine diphosphate. The tract at residues 470–550 is thiamine pyrophosphate binding; that stretch reads DFVGTAAHLV…VMALVGNDAG (81 aa). Asp521 and Asn547 together coordinate Mg(2+).

The protein belongs to the TPP enzyme family. Mg(2+) is required as a cofactor. It depends on thiamine diphosphate as a cofactor. As to expression, expressed in all tissues tested, with highest expression in heart, pancreas and placenta.

The protein resides in the endoplasmic reticulum membrane. It carries out the reaction 2-hydroxyoctadecanoyl-CoA = heptadecanal + formyl-CoA. The enzyme catalyses (2R)-hydroxyhexadecanoyl-CoA = pentadecanal + formyl-CoA. Functionally, endoplasmic reticulum 2-OH acyl-CoA lyase involved in the cleavage (C1 removal) reaction in the fatty acid alpha-oxydation in a thiamine pyrophosphate (TPP)-dependent manner. Involved in the phytosphingosine degradation pathway. This Homo sapiens (Human) protein is 2-hydroxyacyl-CoA lyase 2.